Consider the following 169-residue polypeptide: Thiol peroxidase (169 aa).

In terms of domain architecture, Thioredoxin spans 19-167 (LKVGDRAPEA…YDEVVNKVKE (149 aa)). Residue Cys-61 is the Cysteine sulfenic acid (-SOH) intermediate of the active site. Cysteines 61 and 95 form a disulfide.

The protein belongs to the peroxiredoxin family. Tpx subfamily. Homodimer.

It carries out the reaction a hydroperoxide + [thioredoxin]-dithiol = an alcohol + [thioredoxin]-disulfide + H2O. Functionally, thiol-specific peroxidase that catalyzes the reduction of hydrogen peroxide and organic hydroperoxides to water and alcohols, respectively. Plays a role in cell protection against oxidative stress by detoxifying peroxides. The polypeptide is Thiol peroxidase (Aquifex aeolicus (strain VF5)).